A 351-amino-acid polypeptide reads, in one-letter code: Anthranilate phosphoribosyltransferase (351 aa).

Residues Gly-92, 95–96, Thr-100, 102–105, 120–128, and Ser-132 each bind 5-phospho-alpha-D-ribose 1-diphosphate; these read GD, NIST, and KHGNRAASS. Anthranilate is bound at residue Gly-92. Ser-104 serves as a coordination point for Mg(2+). Asn-123 lines the anthranilate pocket. Position 178 (Arg-178) interacts with anthranilate. Mg(2+) contacts are provided by Asp-236 and Glu-237.

It belongs to the anthranilate phosphoribosyltransferase family. As to quaternary structure, homodimer. It depends on Mg(2+) as a cofactor.

The enzyme catalyses N-(5-phospho-beta-D-ribosyl)anthranilate + diphosphate = 5-phospho-alpha-D-ribose 1-diphosphate + anthranilate. The protein operates within amino-acid biosynthesis; L-tryptophan biosynthesis; L-tryptophan from chorismate: step 2/5. Its function is as follows. Catalyzes the transfer of the phosphoribosyl group of 5-phosphorylribose-1-pyrophosphate (PRPP) to anthranilate to yield N-(5'-phosphoribosyl)-anthranilate (PRA). The chain is Anthranilate phosphoribosyltransferase from Deinococcus geothermalis (strain DSM 11300 / CIP 105573 / AG-3a).